Consider the following 619-residue polypeptide: BUD13 homolog (619 aa).

The segment at 20-56 (ADAGVDRGSESGRKRRKKRPKPGGAGGKGMRIVDDDV) is disordered. Serine 28 bears the Phosphoserine mark. Lysine 65 participates in a covalent cross-link: Glycyl lysine isopeptide (Lys-Gly) (interchain with G-Cter in SUMO2). Residues 106 to 429 (LGGHNEDLPS…AHMYSGAKTG (324 aa)) form a disordered region. Basic and acidic residues predominate over residues 109–128 (HNEDLPSNRHFRHDTPDSSP). The residue at position 123 (threonine 123) is a Phosphothreonine. Residue serine 127 is modified to Phosphoserine. A Phosphothreonine modification is found at threonine 135. Position 139 is a phosphoserine (serine 139). Over residues 139-160 (SPRKDRHDTPDPSPRRARHDTP) the composition is skewed to basic and acidic residues. A Phosphothreonine modification is found at threonine 147. Position 151 is a phosphoserine (serine 151). Threonine 159 carries the phosphothreonine modification. 16 positions are modified to phosphoserine: serine 163, serine 172, serine 175, serine 197, serine 201, serine 214, serine 222, serine 226, serine 235, serine 236, serine 240, serine 248, serine 258, serine 259, serine 271, and serine 281. Residues 246–264 (NNSPDTSRRTLGSSDTQQL) are compositionally biased toward polar residues. A compositionally biased stretch (basic and acidic residues) spans 289 to 306 (KAPERASSKTSPHWKESG). Serine 325 is modified (phosphoserine). A compositionally biased stretch (basic and acidic residues) spans 335-353 (HFGDKKQLDSKGDCQKATD). Phosphoserine is present on residues serine 354, serine 357, serine 358, serine 391, and serine 407. Positions 404-415 (SDLSPPRRSQPP) are enriched in low complexity. The stretch at 433 to 520 (TDIQREQQEL…VEDAMKEMQK (88 aa)) forms a coiled coil. Tyrosine 494 carries the phosphotyrosine modification. Positions 538 to 578 (QEREGDPMANFIKKNKAKENKNKKVRPRYSGPAPPPNRFNI) are disordered. Serine 567 bears the Phosphoserine mark.

It belongs to the CWC26 family. As to quaternary structure, part of the activated spliceosome B/catalytic step 1 spliceosome, one of the forms of the spliceosome which has a well-formed active site but still cannot catalyze the branching reaction and is composed of at least 52 proteins, the U2, U5 and U6 snRNAs and the pre-mRNA. Component of the minor spliceosome, which splices U12-type introns.

It is found in the nucleus. In terms of biological role, involved in pre-mRNA splicing as component of the activated spliceosome. As a component of the minor spliceosome, involved in the splicing of U12-type introns in pre-mRNAs. The sequence is that of BUD13 homolog (BUD13) from Homo sapiens (Human).